The chain runs to 329 residues: Cathepsin K (329 aa).

Residues M1 to A15 form the signal peptide. Residues L16–R114 constitute a propeptide, activation peptide. N103 is a glycosylation site (N-linked (GlcNAc...) asparagine). 3 disulfides stabilise this stretch: C136–C177, C170–C210, and C269–C318. The active site involves C139. Active-site residues include H276 and N296.

This sequence belongs to the peptidase C1 family.

It is found in the lysosome. The protein resides in the secreted. It localises to the apical cell membrane. The enzyme catalyses Broad proteolytic activity. With small-molecule substrates and inhibitors, the major determinant of specificity is P2, which is preferably Leu, Met &gt; Phe, and not Arg.. Its function is as follows. Thiol protease involved in osteoclastic bone resorption and may participate partially in the disorder of bone remodeling. Displays potent endoprotease activity against fibrinogen at acid pH. May play an important role in extracellular matrix degradation. Involved in the release of thyroid hormone thyroxine (T4) by limited proteolysis of TG/thyroglobulin in the thyroid follicle lumen. In Macaca fascicularis (Crab-eating macaque), this protein is Cathepsin K (CTSK).